The primary structure comprises 178 residues: Crossover junction endodeoxyribonuclease RuvC (178 aa).

Residues Asp11, Glu71, and Asp143 contribute to the active site. Positions 11, 71, and 143 each coordinate Mg(2+).

This sequence belongs to the RuvC family. Homodimer which binds Holliday junction (HJ) DNA. The HJ becomes 2-fold symmetrical on binding to RuvC with unstacked arms; it has a different conformation from HJ DNA in complex with RuvA. In the full resolvosome a probable DNA-RuvA(4)-RuvB(12)-RuvC(2) complex forms which resolves the HJ. Requires Mg(2+) as cofactor.

It localises to the cytoplasm. The enzyme catalyses Endonucleolytic cleavage at a junction such as a reciprocal single-stranded crossover between two homologous DNA duplexes (Holliday junction).. Functionally, the RuvA-RuvB-RuvC complex processes Holliday junction (HJ) DNA during genetic recombination and DNA repair. Endonuclease that resolves HJ intermediates. Cleaves cruciform DNA by making single-stranded nicks across the HJ at symmetrical positions within the homologous arms, yielding a 5'-phosphate and a 3'-hydroxyl group; requires a central core of homology in the junction. The consensus cleavage sequence is 5'-(A/T)TT(C/G)-3'. Cleavage occurs on the 3'-side of the TT dinucleotide at the point of strand exchange. HJ branch migration catalyzed by RuvA-RuvB allows RuvC to scan DNA until it finds its consensus sequence, where it cleaves and resolves the cruciform DNA. The protein is Crossover junction endodeoxyribonuclease RuvC of Neisseria meningitidis serogroup A / serotype 4A (strain DSM 15465 / Z2491).